We begin with the raw amino-acid sequence, 240 residues long: Small ribosomal subunit protein uS3 (240 aa).

A KH type-2 domain is found at 39-107; that stretch reads IREFIKEECK…ELHLNIVEVR (69 aa). The span at 212 to 222 shows a compositional bias: basic and acidic residues; that stretch reads PQARDRRHAEL. The disordered stretch occupies residues 212–240; the sequence is PQARDRRHAELQEGGGPRPQGGGRPRRDR. The segment covering 224–234 has biased composition (gly residues); the sequence is EGGGPRPQGGG.

Belongs to the universal ribosomal protein uS3 family. In terms of assembly, part of the 30S ribosomal subunit. Forms a tight complex with proteins S10 and S14.

Functionally, binds the lower part of the 30S subunit head. Binds mRNA in the 70S ribosome, positioning it for translation. This is Small ribosomal subunit protein uS3 from Dinoroseobacter shibae (strain DSM 16493 / NCIMB 14021 / DFL 12).